A 117-amino-acid polypeptide reads, in one-letter code: NADPH-dependent 7-cyano-7-deazaguanine reductase (117 aa).

The active-site Thioimide intermediate is the Cys-31. Asp-38 serves as the catalytic Proton donor. Substrate is bound by residues 53-55 and 72-73; these read IEL and YE.

It belongs to the GTP cyclohydrolase I family. QueF type 1 subfamily.

The protein resides in the cytoplasm. It catalyses the reaction 7-aminomethyl-7-carbaguanine + 2 NADP(+) = 7-cyano-7-deazaguanine + 2 NADPH + 3 H(+). It functions in the pathway tRNA modification; tRNA-queuosine biosynthesis. Its function is as follows. Catalyzes the NADPH-dependent reduction of 7-cyano-7-deazaguanine (preQ0) to 7-aminomethyl-7-deazaguanine (preQ1). This Chlorobaculum tepidum (strain ATCC 49652 / DSM 12025 / NBRC 103806 / TLS) (Chlorobium tepidum) protein is NADPH-dependent 7-cyano-7-deazaguanine reductase.